The following is a 197-amino-acid chain: uncharacterized protein (197 aa).

Residues Met1 to Val135 are disordered. A compositionally biased stretch (polar residues) spans Arg14 to Lys32. The segment covering Ile83–Ala96 has biased composition (basic and acidic residues). Residues Ser116–Asn132 are compositionally biased toward basic residues.

This sequence to Rhizobium NGR234A y4nF and y4aO.

This is an uncharacterized protein from Rhizobium meliloti (strain 1021) (Ensifer meliloti).